The chain runs to 94 residues: Co-chaperonin GroES (94 aa).

Belongs to the GroES chaperonin family. Heptamer of 7 subunits arranged in a ring. Interacts with the chaperonin GroEL.

The protein localises to the cytoplasm. Its function is as follows. Together with the chaperonin GroEL, plays an essential role in assisting protein folding. The GroEL-GroES system forms a nano-cage that allows encapsulation of the non-native substrate proteins and provides a physical environment optimized to promote and accelerate protein folding. GroES binds to the apical surface of the GroEL ring, thereby capping the opening of the GroEL channel. The polypeptide is Co-chaperonin GroES (Bacillus cytotoxicus (strain DSM 22905 / CIP 110041 / 391-98 / NVH 391-98)).